A 66-amino-acid chain; its full sequence is Conotoxin mr5.2 (66 aa).

The first 19 residues, 1 to 19, serve as a signal peptide directing secretion; the sequence is MRCVPVFVILLLLIASAPT. A propeptide spanning residues 20-48 is cleaved from the precursor; it reads VDAQLKTKDDMPLASFHANVKRTLQILRD. Residues glutamate 57 and glutamate 61 each carry the 4-carboxyglutamate modification. Asparagine 65 carries the asparagine amide modification.

Contains 2 disulfide bonds that can be either 'C1-C3, C2-C4' or 'C1-C4, C2-C3', since these disulfide connectivities have been observed for conotoxins with cysteine framework V (for examples, see AC P0DQQ7 and AC P81755). As to expression, expressed by the venom duct.

It localises to the secreted. The sequence is that of Conotoxin mr5.2 from Conus marmoreus (Marble cone).